The sequence spans 307 residues: tRNA dimethylallyltransferase (307 aa).

ATP is bound at residue 9–16 (GPTAIGKT). 11–16 (TAIGKT) is a binding site for substrate. 2 interaction with substrate tRNA regions span residues 34–37 (DSRQ) and 164–168 (QRMMR).

The protein belongs to the IPP transferase family. Monomer. Requires Mg(2+) as cofactor.

The catalysed reaction is adenosine(37) in tRNA + dimethylallyl diphosphate = N(6)-dimethylallyladenosine(37) in tRNA + diphosphate. Catalyzes the transfer of a dimethylallyl group onto the adenine at position 37 in tRNAs that read codons beginning with uridine, leading to the formation of N6-(dimethylallyl)adenosine (i(6)A). In Flavobacterium psychrophilum (strain ATCC 49511 / DSM 21280 / CIP 103535 / JIP02/86), this protein is tRNA dimethylallyltransferase.